A 106-amino-acid polypeptide reads, in one-letter code: Oncosphere antigen B (106 aa).

Residues 11 to 106 form the Fibronectin type-III domain; sequence LPQHFRWSQV…QSELRSMCIK (96 aa).

In Hydatigena taeniaeformis (Feline tapeworm), this protein is Oncosphere antigen B (ONCB).